A 25-amino-acid polypeptide reads, in one-letter code: Panurgine K (25 aa).

Disulfide bonds link Cys-8-Cys-23 and Cys-11-Cys-19.

The protein localises to the target cell membrane. The protein resides in the secreted. Antimicrobial peptide active against Gram-positive bacteria M.luteus (MIC=1.6 uM) and B.subtilis (MIC=3.3 uM). Less active against Gram-negative bacteria E.coli (MIC=63.3 uM) and yeast C.albicans (MIC=24.2 uM). Not active against S.aureus and P.aeruginosa. Has no hemolytic activity against human erythrocytes. Probably acts by disrupting membranes of target cells. The polypeptide is Panurgine K (Panurgus calcaratus (Solitary bee)).